Consider the following 344-residue polypeptide: MFTSTGSNGLYKAPLSKSLLLVPSAISILLTLLFQHYQKFFAYNLQAIKEDFQIWRLVCGRVICLDLKDTFCSSLLIYNFRIFERRYGSRKFSSFLLGAWTLSALFDLLLVEAAQYVFGITINSLPSGFLGPVFALFVPFYCSIPRVQVTQVLGYFSITNKTLVYILGLQLLTSGSYIWILALSGLISGICYNSSILKVHRILCVPSWVAKIFSWTLEPIFSSAEPTNEIRVGMGATVDIQRQQRMELLDRQIMMSQVAQMRRQRQQQGGMINWNRLFPPLRHRHNENYQDHHPSDQDTPPPTEVSEEQVARLMEMGFSRGDALEALRASNNDLNVATNFLLQH.

The N-terminal stretch at 1–34 (MFTSTGSNGLYKAPLSKSLLLVPSAISILLTLLF) is a signal peptide. At 35–91 (QHYQKFFAYNLQAIKEDFQIWRLVCGRVICLDLKDTFCSSLLIYNFRIFERRYGSRK) the chain is on the extracellular side. A helical membrane pass occupies residues 92–111 (FSSFLLGAWTLSALFDLLLV). Residues 112-123 (EAAQYVFGITIN) lie on the Cytoplasmic side of the membrane. Residues 124–142 (SLPSGFLGPVFALFVPFYC) traverse the membrane as a helical segment. At 143–162 (SIPRVQVTQVLGYFSITNKT) the chain is on the extracellular side. A glycan (N-linked (GlcNAc...) asparagine) is linked at Asn-160. A helical transmembrane segment spans residues 163–183 (LVYILGLQLLTSGSYIWILAL). Topologically, residues 184–344 (SGLISGICYN…NVATNFLLQH (161 aa)) are cytoplasmic. Positions 284-307 (RHNENYQDHHPSDQDTPPPTEVSE) are disordered. A compositionally biased stretch (basic and acidic residues) spans 286 to 296 (NENYQDHHPSD). Positions 304 to 344 (EVSEEQVARLMEMGFSRGDALEALRASNNDLNVATNFLLQH) constitute a UBA domain.

The protein localises to the endoplasmic reticulum membrane. In terms of biological role, restricts trafficking of FAF2 from the endoplasmic reticulum to lipid droplets. May negatively regulate the canonical Wnt signaling pathway in the lymphocytes. This chain is Ubiquitin-associated domain-containing protein 2 (UBAC2), found in Gallus gallus (Chicken).